A 113-amino-acid polypeptide reads, in one-letter code: Venom protein 184 (113 aa).

The first 21 residues, Met-1–Ser-21, serve as a signal peptide directing secretion.

Post-translationally, contains 3 disulfide bonds. In terms of tissue distribution, expressed by the venom gland.

It localises to the secreted. The sequence is that of Venom protein 184 from Lychas mucronatus (Chinese swimming scorpion).